We begin with the raw amino-acid sequence, 134 residues long: UPF0412 protein YaaI (134 aa).

The signal sequence occupies residues 1–23 (MRSVLTISASLLFGLALSSVAHA).

It belongs to the UPF0412 family.

This is UPF0412 protein YaaI from Salmonella paratyphi B (strain ATCC BAA-1250 / SPB7).